The chain runs to 329 residues: Beta-ketoacyl-[acyl-carrier-protein] synthase III (329 aa).

Catalysis depends on residues Cys-123 and His-256. The tract at residues 257–261 is ACP-binding; that stretch reads QANIR. Asn-286 is a catalytic residue.

It belongs to the thiolase-like superfamily. FabH family. As to quaternary structure, homodimer.

Its subcellular location is the cytoplasm. The catalysed reaction is malonyl-[ACP] + acetyl-CoA + H(+) = 3-oxobutanoyl-[ACP] + CO2 + CoA. It participates in lipid metabolism; fatty acid biosynthesis. Its function is as follows. Catalyzes the condensation reaction of fatty acid synthesis by the addition to an acyl acceptor of two carbons from malonyl-ACP. Catalyzes the first condensation reaction which initiates fatty acid synthesis and may therefore play a role in governing the total rate of fatty acid production. Possesses both acetoacetyl-ACP synthase and acetyl transacylase activities. Its substrate specificity determines the biosynthesis of branched-chain and/or straight-chain of fatty acids. The chain is Beta-ketoacyl-[acyl-carrier-protein] synthase III from Burkholderia cenocepacia (strain HI2424).